We begin with the raw amino-acid sequence, 134 residues long: MDYAFLGIVAAVLLGSITSLWTVRVQATHRLSLDSLWVLVQWYLTMLLGFAMIYMILQVNGHAVFTPSPNSASKDRLSLLEDSLYLSGMTLLSVGYGDVTPIGVGRWIAIAEALVGYIMPAVIVTRTVFDWDHR.

The chain is Protein LctB (lctB) from Bacillus caldotenax.